A 79-amino-acid chain; its full sequence is UPF0180 protein BCB4264_A1446 (79 aa).

This sequence belongs to the UPF0180 family.

This chain is UPF0180 protein BCB4264_A1446, found in Bacillus cereus (strain B4264).